A 105-amino-acid polypeptide reads, in one-letter code: Translation initiation factor 1A (105 aa).

An S1-like domain is found at 18 to 92 (IRVKLPNKRI…DKCDIIYRYT (75 aa)).

It belongs to the eIF-1A family.

Functionally, seems to be required for maximal rate of protein biosynthesis. Enhances ribosome dissociation into subunits and stabilizes the binding of the initiator Met-tRNA(I) to 40 S ribosomal subunits. This is Translation initiation factor 1A (eIF1A) from Methanocorpusculum labreanum (strain ATCC 43576 / DSM 4855 / Z).